The following is a 425-amino-acid chain: Serine--tRNA ligase 1 (425 aa).

230–232 (TSE) is an L-serine binding site. Residues 261–263 (RRE) and valine 277 contribute to the ATP site. Glutamate 284 is an L-serine binding site. 348–351 (ELTS) serves as a coordination point for ATP. Threonine 382 contributes to the L-serine binding site.

Belongs to the class-II aminoacyl-tRNA synthetase family. Type-1 seryl-tRNA synthetase subfamily. Homodimer. The tRNA molecule binds across the dimer.

It localises to the cytoplasm. The catalysed reaction is tRNA(Ser) + L-serine + ATP = L-seryl-tRNA(Ser) + AMP + diphosphate + H(+). It catalyses the reaction tRNA(Sec) + L-serine + ATP = L-seryl-tRNA(Sec) + AMP + diphosphate + H(+). The protein operates within aminoacyl-tRNA biosynthesis; selenocysteinyl-tRNA(Sec) biosynthesis; L-seryl-tRNA(Sec) from L-serine and tRNA(Sec): step 1/1. In terms of biological role, catalyzes the attachment of serine to tRNA(Ser). Is also able to aminoacylate tRNA(Sec) with serine, to form the misacylated tRNA L-seryl-tRNA(Sec), which will be further converted into selenocysteinyl-tRNA(Sec). This Streptomyces avermitilis (strain ATCC 31267 / DSM 46492 / JCM 5070 / NBRC 14893 / NCIMB 12804 / NRRL 8165 / MA-4680) protein is Serine--tRNA ligase 1.